We begin with the raw amino-acid sequence, 479 residues long: NADH oxidase (479 aa).

Residues 8–12 (GVNHA), D33, C43, V80, 111–114 (ASGA), K149, and Y177 contribute to the FAD site. Catalysis depends on H11, which acts as the Proton acceptor. Catalysis depends on C43, which acts as the Redox-active. Position 43 is a cysteine sulfinic acid (-SO2H) (C43). NAD(+)-binding positions include 170–185 (VAIVGSGYIGLELAEA), D197, and G264. Residues 295-305 (LNHENVYVIGG), L322, A323, and T324 each bind FAD. A353 is a binding site for NAD(+). Position 450 (F450) interacts with FAD.

The protein belongs to the class-III pyridine nucleotide-disulfide oxidoreductase family. The cofactor is FAD.

It carries out the reaction 2 NADH + O2 + 2 H(+) = 2 NAD(+) + 2 H2O. Its function is as follows. Catalyzes the four-electron reduction of molecular oxygen to water. The protein is NADH oxidase (nox) of Mycoplasma pneumoniae (strain ATCC 29342 / M129 / Subtype 1) (Mycoplasmoides pneumoniae).